We begin with the raw amino-acid sequence, 327 residues long: tRNA N6-adenosine threonylcarbamoyltransferase (327 aa).

2 residues coordinate Fe cation: His-107 and His-111. Residues Leu-129 to Gly-133, Asp-162, Gly-175, and Asn-263 each bind substrate. A Fe cation-binding site is contributed by Asp-291.

Belongs to the KAE1 / TsaD family. Fe(2+) serves as cofactor.

The protein resides in the cytoplasm. It carries out the reaction L-threonylcarbamoyladenylate + adenosine(37) in tRNA = N(6)-L-threonylcarbamoyladenosine(37) in tRNA + AMP + H(+). In terms of biological role, required for the formation of a threonylcarbamoyl group on adenosine at position 37 (t(6)A37) in tRNAs that read codons beginning with adenine. Is involved in the transfer of the threonylcarbamoyl moiety of threonylcarbamoyl-AMP (TC-AMP) to the N6 group of A37, together with TsaE and TsaB. TsaD likely plays a direct catalytic role in this reaction. The polypeptide is tRNA N6-adenosine threonylcarbamoyltransferase (Nautilia profundicola (strain ATCC BAA-1463 / DSM 18972 / AmH)).